The primary structure comprises 87 residues: Small ribosomal subunit protein bS20 (87 aa).

The disordered stretch occupies residues 1–22 (MAHHKSALKRIKQNKRKQFRNK).

The protein belongs to the bacterial ribosomal protein bS20 family.

Its function is as follows. Binds directly to 16S ribosomal RNA. The sequence is that of Small ribosomal subunit protein bS20 from Geobacter metallireducens (strain ATCC 53774 / DSM 7210 / GS-15).